The chain runs to 571 residues: Proline--tRNA ligase (571 aa).

Belongs to the class-II aminoacyl-tRNA synthetase family. ProS type 1 subfamily. As to quaternary structure, homodimer.

The protein localises to the cytoplasm. The enzyme catalyses tRNA(Pro) + L-proline + ATP = L-prolyl-tRNA(Pro) + AMP + diphosphate. Catalyzes the attachment of proline to tRNA(Pro) in a two-step reaction: proline is first activated by ATP to form Pro-AMP and then transferred to the acceptor end of tRNA(Pro). As ProRS can inadvertently accommodate and process non-cognate amino acids such as alanine and cysteine, to avoid such errors it has two additional distinct editing activities against alanine. One activity is designated as 'pretransfer' editing and involves the tRNA(Pro)-independent hydrolysis of activated Ala-AMP. The other activity is designated 'posttransfer' editing and involves deacylation of mischarged Ala-tRNA(Pro). The misacylated Cys-tRNA(Pro) is not edited by ProRS. The sequence is that of Proline--tRNA ligase from Haemophilus ducreyi (strain 35000HP / ATCC 700724).